We begin with the raw amino-acid sequence, 364 residues long: Cobalt-precorrin-5B C(1)-methyltransferase (364 aa).

This sequence belongs to the CbiD family.

It catalyses the reaction Co-precorrin-5B + S-adenosyl-L-methionine = Co-precorrin-6A + S-adenosyl-L-homocysteine. It participates in cofactor biosynthesis; adenosylcobalamin biosynthesis; cob(II)yrinate a,c-diamide from sirohydrochlorin (anaerobic route): step 6/10. Functionally, catalyzes the methylation of C-1 in cobalt-precorrin-5B to form cobalt-precorrin-6A. This chain is Cobalt-precorrin-5B C(1)-methyltransferase, found in Pseudomonas putida (strain ATCC 47054 / DSM 6125 / CFBP 8728 / NCIMB 11950 / KT2440).